A 271-amino-acid chain; its full sequence is uncharacterized protein (271 aa).

The DOD-type homing endonuclease domain maps to Ile77–Val205.

This is an uncharacterized protein from Methanocaldococcus jannaschii (strain ATCC 43067 / DSM 2661 / JAL-1 / JCM 10045 / NBRC 100440) (Methanococcus jannaschii).